Consider the following 297-residue polypeptide: Adrenocorticotropic hormone receptor (297 aa).

The Extracellular portion of the chain corresponds to 1–23; it reads MKHIITPYEHTNDTARNNSDCPD. 2 N-linked (GlcNAc...) asparagine glycosylation sites follow: Asn12 and Asn17. Cystine bridges form between Cys21/Cys253 and Cys245/Cys251. Residues 24 to 49 form a helical membrane-spanning segment; the sequence is VVLPEEIFFTISIIGVLENLIVLLAV. At 50 to 58 the chain is on the cytoplasmic side; the sequence is VKNKNLQCP. A helical membrane pass occupies residues 59-79; the sequence is MYFFICSLAISDMLGSLYKIL. The Extracellular segment spans residues 80 to 104; the sequence is ENILIMFRNRGYLQPRGNFESTADD. A helical transmembrane segment spans residues 105 to 126; the sequence is IIDCMFILSLLGSIFSLSVIAA. Over 127–147 the chain is Cytoplasmic; that stretch reads DRYITIFHALQYHSIVTMRRT. The chain crosses the membrane as a helical span at residues 148–168; the sequence is IITLTVIWIFCTGSGIAMVIF. The Extracellular segment spans residues 169 to 180; that stretch reads SHHVPTVLTFTS. The helical transmembrane segment at 181 to 199 threads the bilayer; sequence LFPLMLVFILCLYIHMFLL. The Cytoplasmic segment spans residues 200–217; that stretch reads ARSHARKISTLPRANMKG. The helical transmembrane segment at 218–244 threads the bilayer; the sequence is AITLTILLGVFIFCWAPFILHVLLMTF. At 245 to 256 the chain is on the extracellular side; it reads CPNNPYCVCYMS. A helical transmembrane segment spans residues 257-278; the sequence is LFQINGMLIMCNAVIDPFIYAF. The Cytoplasmic portion of the chain corresponds to 279-297; it reads RSPELRDAFKKMFSCHRYQ. Residue Cys293 is the site of S-palmitoyl cysteine attachment.

It belongs to the G-protein coupled receptor 1 family. In terms of assembly, homodimer. Interacts with corticotropin (ACTH). Interacts with MRAP; this interaction targets MC2R to the plasma membrane. Interacts with MRAP2; competing with MRAP for binding to MC2R and impairing the binding of corticotropin (ACTH). Post-translationally, ubiquitinated by MGRN1 that may be involved in post-endocytic trafficking and/or degradation of internalized receptor.

Its subcellular location is the cell membrane. Hormone receptor primarily expressed in adrenal cortex that plays a key role in regulating adrenocortical function. Upon corticotropin (ACTH) binding, facilitates the release of adrenal glucocorticoids, including cortisol and corticosterone. In addition, MC2R is required for fetal and neonatal adrenal gland development. Mechanistically, activates adenylate cyclase (cAMP), the MAPK cascade as well as the cAMP-dependent protein kinase A pathway leading to steroidogenic factor 1/NR5A1-mediated transcriptional activation. This chain is Adrenocorticotropic hormone receptor (MC2R), found in Mesocricetus auratus (Golden hamster).